We begin with the raw amino-acid sequence, 1311 residues long: AF4/FMR2 family member 2 (1311 aa).

Disordered stretches follow at residues 94–187, 204–229, and 377–417; these read LVGI…LTQD, PQIG…GEDA, and TAGH…TKSV. Polar residues predominate over residues 101–111; sequence SVPQNPNNKNE. Residues 155 to 164 show a composition bias toward basic and acidic residues; it reads SKPEWSRDSH. Polar residues predominate over residues 165–187; that stretch reads NPSTVLASQASGQPNKMQTLTQD. Composition is skewed to polar residues over residues 377–396 and 403–417; these read TAGH…SQHL and QKWN…TKSV. Ser430 carries the phosphoserine modification. 4 disordered regions span residues 457-530, 574-726, 818-867, and 881-943; these read KAKP…KWQL, TNAS…DQEE, SLHA…IPEK, and PPCI…DKNI. Residues 465–477 show a composition bias toward pro residues; it reads VNPPLATPQPPPA. A compositionally biased stretch (low complexity) spans 478-491; the sequence is VQASGGSGSSSESE. Position 517 is a phosphothreonine (Thr517). Over residues 582 to 597 the composition is skewed to basic and acidic residues; sequence EPKERPLLSLIREKAR. The segment covering 615-625 has biased composition (polar residues); it reads STTSETVSQRT. Residues 655–668 show a composition bias toward basic and acidic residues; it reads PKEKESVELHDPPR. The segment covering 669-679 has biased composition (basic residues); the sequence is GRNKATAHKPA. Basic and acidic residues predominate over residues 857 to 867; it reads PIEVAEKIPEK. 2 stretches are compositionally biased toward pro residues: residues 883–892 and 913–922; these read CISPAPPHKP and FPPPLSPLPE.

The protein belongs to the AF4 family. In terms of tissue distribution, brain (most abundant in hippocampus and amygdala), placenta and lung.

It is found in the nucleus speckle. Functionally, RNA-binding protein. Might be involved in alternative splicing regulation through an interaction with G-quartet RNA structure. In Homo sapiens (Human), this protein is AF4/FMR2 family member 2.